The following is a 1045-amino-acid chain: Protein phosphatase Slingshot (1045 aa).

Polar residues predominate over residues 1 to 20 (MALVTVQRSPSVAGSCSNSD). Disordered stretches follow at residues 1–35 (MALVTVQRSPSVAGSCSNSDGESEDDEGNSKGNDR), 58–80 (TQSERRLSTDSTRSSNSTQSNNS), 143–194 (KVGG…DNKN), and 306–325 (ESRRPPSPDAIRNKPPEKEE). The segment covering 66-80 (TDSTRSSNSTQSNNS) has biased composition (low complexity). Polar residues predominate over residues 149 to 174 (GTKSSTSPAVPTQRQLSVEQTATEAS). Over residues 175–185 (SKCDKTADKEN) the composition is skewed to basic and acidic residues. Residues 324 to 379 (EETESVIKMKLKAIMMSVDLDEVTSKYIRGRLEEILDMDLGEYKSFIDAEMLVILG) enclose the DEK-C domain. Positions 383 to 524 (APTKIFEHVY…LETYSGMLDA (142 aa)) constitute a Tyrosine-protein phosphatase domain. Cys468 (phosphocysteine intermediate) is an active-site residue. A compositionally biased stretch (basic and acidic residues) spans 529-547 (EKLQRSKSETNLKSTKDAR). Disordered stretches follow at residues 529–631 (EKLQ…PERS), 699–799 (SHLG…GDNR), and 1001–1045 (ACSA…SDSS). Polar residues predominate over residues 560–569 (ALNQAKSKST). Basic residues predominate over residues 586 to 601 (MHRRSIAQKSQRRMVR). The segment covering 602–625 (RSSSTSPKTQTAVVTKQQSQSMEN) has biased composition (polar residues). The span at 704 to 713 (SVSGSSSGNI) shows a compositional bias: low complexity. Position 719 is a phosphoserine (Ser719). Residues 721-732 (CSDVFSSQVDSV) show a composition bias toward low complexity. Polar residues-rich tracts occupy residues 764-774 (TPQQQKQQSNA) and 1008-1021 (KKTTSHQSLPSSPV). Low complexity predominate over residues 1029 to 1045 (SAASNSNSSASNSSDSS).

Belongs to the protein-tyrosine phosphatase family. Interacts with actin.

The protein localises to the cytoplasm. It is found in the cytoskeleton. It catalyses the reaction O-phospho-L-tyrosyl-[protein] + H2O = L-tyrosyl-[protein] + phosphate. It carries out the reaction O-phospho-L-seryl-[protein] + H2O = L-seryl-[protein] + phosphate. The catalysed reaction is O-phospho-L-threonyl-[protein] + H2O = L-threonyl-[protein] + phosphate. Protein phosphatase which regulates actin filament dynamics. Dephosphorylates and activates the actin binding/depolymerizing factor tsr/cofilin, which subsequently binds to actin filaments and stimulates their disassembly. Required for axon growth. The chain is Protein phosphatase Slingshot (ssh) from Drosophila melanogaster (Fruit fly).